The following is an 83-amino-acid chain: Small ribosomal subunit protein bS16 (83 aa).

Belongs to the bacterial ribosomal protein bS16 family.

This Borrelia hermsii (strain HS1 / DAH) protein is Small ribosomal subunit protein bS16.